Here is a 266-residue protein sequence, read N- to C-terminus: Glucose 1-dehydrogenase (266 aa).

Residue 15–39 (LVTGASQGIGEATALRFAEEGAQVA) participates in NADP(+) binding. Residue serine 149 participates in substrate binding. Tyrosine 162 serves as the catalytic Proton acceptor.

This sequence belongs to the short-chain dehydrogenases/reductases (SDR) family. Homotetramer or homooctamer.

The catalysed reaction is D-glucose + NADP(+) = D-glucono-1,5-lactone + NADPH + H(+). In terms of biological role, oxidizes both D-glucose and D-mannose, but is 15 times more catalytically efficient with mannose. Strictly dependent on NADP. The protein is Glucose 1-dehydrogenase of Gluconobacter oxydans (strain 621H) (Gluconobacter suboxydans).